A 254-amino-acid polypeptide reads, in one-letter code: MEGDGDKLQSAVIVPRHIALVMDGNGRWAKIRGKERCEGHAAGVDALRVALRAAAGCGVEYLTAYTFSTENWNRPEEEVRALMGLFVTAIMNEMLDLMTNNIRLLAIGDFSRLPEDVRESLEKGIRETAGNTGLTLVLALSYSSRWEMTDVIRRLARKVRDGSVEPEDINVDLVSDHLSTAGIPDPDLFIRTGGEKRISNFLMWQMAYTELFFTDTLWPDFDADCLKAAIEEYSSRERRFGKTSEQIALRENKY.

The active site involves aspartate 23. Aspartate 23 serves as a coordination point for Mg(2+). Substrate is bound by residues 24–27 (GNGR), tryptophan 28, arginine 36, histidine 40, and 68–70 (STE). The active-site Proton acceptor is asparagine 71. Substrate is bound by residues tryptophan 72, arginine 74, arginine 191, and 197–199 (RIS). A Mg(2+)-binding site is contributed by glutamate 210.

Belongs to the UPP synthase family. As to quaternary structure, homodimer. Requires Mg(2+) as cofactor.

Its function is as follows. Catalyzes the condensation of isopentenyl diphosphate (IPP) with allylic pyrophosphates generating different type of terpenoids. In Porphyromonas gingivalis (strain ATCC BAA-308 / W83), this protein is Isoprenyl transferase.